The sequence spans 261 residues: Undecaprenyl-diphosphatase (261 aa).

6 consecutive transmembrane segments (helical) span residues 39-59 (NVLL…LIIF), 76-96 (LLII…KDFF), 99-119 (LFVS…ILWL), 173-193 (AAKF…VLDL), 206-226 (IDLM…YFAV), and 238-258 (LTWF…LQAA).

Belongs to the UppP family.

Its subcellular location is the cell membrane. The enzyme catalyses di-trans,octa-cis-undecaprenyl diphosphate + H2O = di-trans,octa-cis-undecaprenyl phosphate + phosphate + H(+). Functionally, catalyzes the dephosphorylation of undecaprenyl diphosphate (UPP). Confers resistance to bacitracin. The polypeptide is Undecaprenyl-diphosphatase (Carboxydothermus hydrogenoformans (strain ATCC BAA-161 / DSM 6008 / Z-2901)).